Here is a 245-residue protein sequence, read N- to C-terminus: tRNA pseudouridine synthase A (245 aa).

Aspartate 52 serves as the catalytic Nucleophile. Position 110 (tyrosine 110) interacts with substrate.

It belongs to the tRNA pseudouridine synthase TruA family. In terms of assembly, homodimer.

It catalyses the reaction uridine(38/39/40) in tRNA = pseudouridine(38/39/40) in tRNA. Functionally, formation of pseudouridine at positions 38, 39 and 40 in the anticodon stem and loop of transfer RNAs. The protein is tRNA pseudouridine synthase A of Borrelia duttonii (strain Ly).